The following is a 99-amino-acid chain: Protein Tat (99 aa).

The interval 1–20 is disordered; sequence MEPVDPNIEPWNQPGSQPKT. Residues 1–24 form an interaction with human CREBBP region; it reads MEPVDPNIEPWNQPGSQPKTACNQ. The tract at residues 1–48 is transactivation; sequence MEPVDPNIEPWNQPGSQPKTACNQCYCKKCCYHCQLCFLQKGLGICYG. Cysteine 22, cysteine 25, and cysteine 27 together coordinate Zn(2+). Residues 22–37 form a cysteine-rich region; the sequence is CNQCYCKKCCYHCQLC. Lysine 28 carries the N6-acetyllysine; by host PCAF modification. The Zn(2+) site is built by cysteine 30, histidine 33, cysteine 34, and cysteine 37. The interval 38–48 is core; it reads FLQKGLGICYG. The Nuclear localization signal, RNA-binding (TAR), and protein transduction signature appears at 49–57; that stretch reads REKRRQRTT. The segment at 49-86 is interaction with the host capping enzyme RNGTT; the sequence is REKRRQRTTTPYASKNHKDPIPKQPLPQARGDPTGPKE. Lysine 51 carries the N6-acetyllysine; by host EP300 and GCN5L2 modification. Arginine 52 and arginine 53 each carry asymmetric dimethylarginine; by host PRMT6. The segment at 54–99 is disordered; that stretch reads QRTTTPYASKNHKDPIPKQPLPQARGDPTGPKESKKEVESKTKTDP. Lysine 71 is covalently cross-linked (Glycyl lysine isopeptide (Lys-Gly) (interchain with G-Cter in ubiquitin)). The short motif at 78-80 is the Cell attachment site element; sequence RGD. Residues 83–99 are compositionally biased toward basic and acidic residues; it reads GPKESKKEVESKTKTDP.

It belongs to the lentiviruses Tat family. Interacts with host CCNT1. Associates with the P-TEFb complex composed at least of Tat, P-TEFb (CDK9 and CCNT1), TAR RNA, RNA Pol II. Recruits the HATs CREBBP, TAF1/TFIID, EP300, PCAF and GCN5L2. Interacts with host KAT5/Tip60; this interaction targets the latter to degradation. Interacts with the host deacetylase SIRT1. Interacts with host capping enzyme RNGTT; this interaction stimulates RNGTT. Binds to host KDR, and to the host integrins ITGAV/ITGB3 and ITGA5/ITGB1. Interacts with host KPNB1/importin beta-1 without previous binding to KPNA1/importin alpha-1. Interacts with EIF2AK2. Interacts with host nucleosome assembly protein NAP1L1; this interaction may be required for the transport of Tat within the nucleus, since the two proteins interact at the nuclear rim. Interacts with host C1QBP/SF2P32; this interaction involves lysine-acetylated Tat. Interacts with the host chemokine receptors CCR2, CCR3 and CXCR4. Interacts with host DPP4/CD26; this interaction may trigger an anti-proliferative effect. Interacts with host LDLR. Interacts with the host extracellular matrix metalloproteinase MMP1. Interacts with host PRMT6; this interaction mediates Tat's methylation. Interacts with, and is ubiquitinated by MDM2/Hdm2. Interacts with host PSMC3 and HTATIP2. Interacts with STAB1; this interaction may overcome SATB1-mediated repression of IL2 and IL2RA (interleukin) in T cells by binding to the same domain than HDAC1. Interacts (when acetylated) with human CDK13, thereby increasing HIV-1 mRNA splicing and promoting the production of the doubly spliced HIV-1 protein Nef. Interacts with host TBP; this interaction modulates the activity of transcriptional pre-initiation complex. Interacts with host RELA. Interacts with host PLSCR1; this interaction negatively regulates Tat transactivation activity by altering its subcellular distribution. In terms of processing, asymmetrical arginine methylation by host PRMT6 seems to diminish the transactivation capacity of Tat and affects the interaction with host CCNT1. Acetylation by EP300, CREBBP, GCN5L2/GCN5 and PCAF regulates the transactivation activity of Tat. EP300-mediated acetylation of Lys-50 promotes dissociation of Tat from the TAR RNA through the competitive binding to PCAF's bromodomain. In addition, the non-acetylated Tat's N-terminus can also interact with PCAF. PCAF-mediated acetylation of Lys-28 enhances Tat's binding to CCNT1. Lys-50 is deacetylated by SIRT1. Post-translationally, polyubiquitination by host MDM2 does not target Tat to degradation, but activates its transactivation function and fosters interaction with CCNT1 and TAR RNA. In terms of processing, phosphorylated by EIF2AK2 on serine and threonine residues adjacent to the basic region important for TAR RNA binding and function. Phosphorylation of Tat by EIF2AK2 is dependent on the prior activation of EIF2AK2 by dsRNA.

The protein resides in the host nucleus. Its subcellular location is the host nucleolus. The protein localises to the host cytoplasm. It is found in the secreted. Transcriptional activator that increases RNA Pol II processivity, thereby increasing the level of full-length viral transcripts. Recognizes a hairpin structure at the 5'-LTR of the nascent viral mRNAs referred to as the transactivation responsive RNA element (TAR) and recruits the cyclin T1-CDK9 complex (P-TEFb complex) that will in turn hyperphosphorylate the RNA polymerase II to allow efficient elongation. The CDK9 component of P-TEFb and other Tat-activated kinases hyperphosphorylate the C-terminus of RNA Pol II that becomes stabilized and much more processive. Other factors such as HTATSF1/Tat-SF1, SUPT5H/SPT5, and HTATIP2 are also important for Tat's function. Besides its effect on RNA Pol II processivity, Tat induces chromatin remodeling of proviral genes by recruiting the histone acetyltransferases (HATs) CREBBP, EP300 and PCAF to the chromatin. This also contributes to the increase in proviral transcription rate, especially when the provirus integrates in transcriptionally silent region of the host genome. To ensure maximal activation of the LTR, Tat mediates nuclear translocation of NF-kappa-B by interacting with host RELA. Through its interaction with host TBP, Tat may also modulate transcription initiation. Tat can reactivate a latently infected cell by penetrating in it and transactivating its LTR promoter. In the cytoplasm, Tat is thought to act as a translational activator of HIV-1 mRNAs. In terms of biological role, extracellular circulating Tat can be endocytosed by surrounding uninfected cells via the binding to several surface receptors such as CD26, CXCR4, heparan sulfate proteoglycans (HSPG) or LDLR. Neurons are rarely infected, but they internalize Tat via their LDLR. Through its interaction with nuclear HATs, Tat is potentially able to control the acetylation-dependent cellular gene expression. Modulates the expression of many cellular genes involved in cell survival, proliferation or in coding for cytokines or cytokine receptors. Tat plays a role in T-cell and neurons apoptosis. Tat induced neurotoxicity and apoptosis probably contribute to neuroAIDS. Circulating Tat also acts as a chemokine-like and/or growth factor-like molecule that binds to specific receptors on the surface of the cells, affecting many cellular pathways. In the vascular system, Tat binds to ITGAV/ITGB3 and ITGA5/ITGB1 integrins dimers at the surface of endothelial cells and competes with bFGF for heparin-binding sites, leading to an excess of soluble bFGF. The polypeptide is Protein Tat (Homo sapiens (Human)).